A 421-amino-acid chain; its full sequence is Gamma-glutamyl phosphate reductase (421 aa).

It belongs to the gamma-glutamyl phosphate reductase family.

The protein resides in the cytoplasm. The catalysed reaction is L-glutamate 5-semialdehyde + phosphate + NADP(+) = L-glutamyl 5-phosphate + NADPH + H(+). The protein operates within amino-acid biosynthesis; L-proline biosynthesis; L-glutamate 5-semialdehyde from L-glutamate: step 2/2. Its function is as follows. Catalyzes the NADPH-dependent reduction of L-glutamate 5-phosphate into L-glutamate 5-semialdehyde and phosphate. The product spontaneously undergoes cyclization to form 1-pyrroline-5-carboxylate. The sequence is that of Gamma-glutamyl phosphate reductase from Acinetobacter baumannii (strain ACICU).